The chain runs to 75 residues: Cruzioseptin-8 (75 aa).

Residues 1-22 form the signal peptide; that stretch reads MAFLKKCLFLVLFLGLVSLSIC. Residues 23 to 43 constitute a propeptide that is removed on maturation; that stretch reads EEEKREEENEEVQEDDDQSEE. The disordered stretch occupies residues 25–44; sequence EKREEENEEVQEDDDQSEEK. A compositionally biased stretch (acidic residues) spans 30-41; that stretch reads ENEEVQEDDDQS. The residue at position 72 (glutamine 72) is a Glutamine amide. A propeptide spanning residues 74-75 is cleaved from the precursor; that stretch reads EQ.

Expressed by the skin glands.

It localises to the secreted. Functionally, has antimicrobial activity. This Cruziohyla calcarifer (Splendid leaf frog) protein is Cruzioseptin-8.